The chain runs to 378 residues: 3-dehydroquinate synthase (378 aa).

Residues 115-119, 139-140, Lys152, and Lys161 contribute to the NAD(+) site; these read GVVGD and TS. Zn(2+) contacts are provided by Glu194, His256, and His275.

The protein belongs to the sugar phosphate cyclases superfamily. Dehydroquinate synthase family. It depends on Co(2+) as a cofactor. Zn(2+) is required as a cofactor. Requires NAD(+) as cofactor.

It localises to the cytoplasm. It carries out the reaction 7-phospho-2-dehydro-3-deoxy-D-arabino-heptonate = 3-dehydroquinate + phosphate. It functions in the pathway metabolic intermediate biosynthesis; chorismate biosynthesis; chorismate from D-erythrose 4-phosphate and phosphoenolpyruvate: step 2/7. Its function is as follows. Catalyzes the conversion of 3-deoxy-D-arabino-heptulosonate 7-phosphate (DAHP) to dehydroquinate (DHQ). The polypeptide is 3-dehydroquinate synthase (Brucella abortus biovar 1 (strain 9-941)).